The chain runs to 343 residues: Galactoside alpha-(1,2)-fucosyltransferase 2 (343 aa).

The Cytoplasmic portion of the chain corresponds to 1–14; that stretch reads MLVVQMPFSFPVAH. A helical; Signal-anchor for type II membrane protein membrane pass occupies residues 15-28; sequence FILFVFTVSTIFHI. At 29-343 the chain is on the lumenal side; it reads QQRLAKIQAM…AADLSPLLKH (315 aa). N-linked (GlcNAc...) asparagine glycosylation is found at Asn-188, Asn-282, and Asn-308.

The protein belongs to the glycosyltransferase 11 family.

The protein localises to the golgi apparatus. It localises to the golgi stack membrane. The enzyme catalyses a beta-D-galactosyl-(1-&gt;3)-N-acetyl-beta-D-glucosaminyl derivative + GDP-beta-L-fucose = an alpha-L-Fuc-(1-&gt;2)-beta-D-Gal-(1-&gt;3)-beta-D-GlcNAc derivative + GDP + H(+). It catalyses the reaction a beta-D-galactosyl-(1-&gt;4)-N-acetyl-beta-D-glucosaminyl derivative + GDP-beta-L-fucose = an alpha-L-Fuc-(1-&gt;2)-beta-D-Gal-(1-&gt;4)-beta-D-GlcNAc derivative + GDP + H(+). The catalysed reaction is a neolactoside nLc4Cer + GDP-beta-L-fucose = a neolactoside IV(2)-alpha-Fuc-nLc4Cer + GDP + H(+). It carries out the reaction a neolactoside nLc4Cer(d18:1(4E)) + GDP-beta-L-fucose = a neolactoside IV(2)-alpha-Fuc-nLc4Cer(d18:1(4E)) + GDP + H(+). The enzyme catalyses a ganglioside GM1 + GDP-beta-L-fucose = a ganglioside Fuc-GM1 + GDP + H(+). It catalyses the reaction a ganglioside GA1 + GDP-beta-L-fucose = a ganglioside Fuc-GA1 + GDP + H(+). The catalysed reaction is Lc4Cer + GDP-beta-L-fucose = alpha-L-fucosyl-(1-&gt;2)-beta-D-galactosyl-(1-&gt;3)-N-acetyl-beta-D-glucosaminyl-(1-&gt;3)-beta-D-galactosyl-(1-&gt;4)-beta-D-glucosyl-(1&lt;-&gt;1')-ceramide + GDP + H(+). It carries out the reaction a beta-D-Gal-(1-&gt;3)-beta-D-GlcNAc-(1-&gt;3)-beta-D-Gal-(1-&gt;4)-beta-D-Glc-(1&lt;-&gt;1')-Cer(d18:1(4E)) + GDP-beta-L-fucose = alpha-L-fucosyl-(1-&gt;2)- beta-D-galactosyl-(1-&gt;3)-N-acetyl-beta-D-glucosaminyl-(1-&gt;3)-beta-D-galactosyl-(1-&gt;4)-beta-D-glucosyl-(1&lt;-&gt;1')-N-acylsphing-4-enine + GDP + H(+). The enzyme catalyses a ganglioside GD1b + GDP-beta-L-fucose = a ganglioside Fuc-GD1b + GDP + H(+). It catalyses the reaction a ganglioside GM1 (d18:1(4E)) + GDP-beta-L-fucose = a ganglioside Fuc-GM1 (d18:1(4E)) + GDP + H(+). The catalysed reaction is a globoside GalGb4Cer (d18:1(4E)) + GDP-beta-L-fucose = a globoside Globo-H (d18:1(4E)) + GDP + H(+). It carries out the reaction a lactoside III(4)-a-Fuc-Lc4Cer + GDP-beta-L-fucose = a lactoside IV(2),III(4)-a-[Fuc]2-Lc4Cer + GDP + H(+). The enzyme catalyses beta-D-galactosyl-(1-&gt;3)-N-acetyl-D-galactosamine + GDP-beta-L-fucose = alpha-L-fucosyl-(1-&gt;2)-beta-D-galactosyl-(1-&gt;3)-N-acetyl-D-galactosamine + GDP + H(+). The protein operates within protein modification; protein glycosylation. Functionally, catalyzes the transfer of L-fucose, from a guanosine diphosphate-beta-L-fucose, to the terminal galactose on both O- and N-linked glycans chains of cell surface glycoproteins and glycolipids and the resulting epitope regulates several processes such as cell-cell interaction including host-microbe interaction, cell surface expression and cell proliferation. Preferentially fucosylates gangliosides GA1 and GM1 in the antrum, cecum and colon and in the female reproductive organs. Fucosylated host glycoproteins or glycolipids mediate interaction with intestinal microbiota influencing its composition. Creates a soluble precursor oligosaccharide FuC-alpha ((1,2)Galbeta-) called the H antigen which is an essential substrate for the final step in the soluble ABO blood group antigen synthesis pathway. This chain is Galactoside alpha-(1,2)-fucosyltransferase 2, found in Pongo pygmaeus (Bornean orangutan).